A 338-amino-acid polypeptide reads, in one-letter code: 1-aminocyclopropane-1-carboxylate deaminase (338 aa).

At Lys-51 the chain carries N6-(pyridoxal phosphate)lysine. The active-site Nucleophile is the Ser-78.

The protein belongs to the ACC deaminase/D-cysteine desulfhydrase family. Homotrimer. Requires pyridoxal 5'-phosphate as cofactor.

The catalysed reaction is 1-aminocyclopropane-1-carboxylate + H2O = 2-oxobutanoate + NH4(+). In terms of biological role, catalyzes a cyclopropane ring-opening reaction, the irreversible conversion of 1-aminocyclopropane-1-carboxylate (ACC) to ammonia and alpha-ketobutyrate. Allows growth on ACC as a nitrogen source. The sequence is that of 1-aminocyclopropane-1-carboxylate deaminase from Burkholderia ambifaria (strain ATCC BAA-244 / DSM 16087 / CCUG 44356 / LMG 19182 / AMMD) (Burkholderia cepacia (strain AMMD)).